Reading from the N-terminus, the 289-residue chain is Acetyl-coenzyme A carboxylase carboxyl transferase subunit beta (289 aa).

The region spanning 28–289 is the CoA carboxyltransferase N-terminal domain; the sequence is VMTKCPKCKK…QGEGMAVWQN (262 aa). Cys-32, Cys-35, Cys-51, and Cys-54 together coordinate Zn(2+). The C4-type zinc finger occupies 32–54; the sequence is CPKCKKIMYTKELLKNLKVCVNC.

This sequence belongs to the AccD/PCCB family. In terms of assembly, acetyl-CoA carboxylase is a heterohexamer composed of biotin carboxyl carrier protein (AccB), biotin carboxylase (AccC) and two subunits each of ACCase subunit alpha (AccA) and ACCase subunit beta (AccD). Zn(2+) serves as cofactor.

Its subcellular location is the cytoplasm. It carries out the reaction N(6)-carboxybiotinyl-L-lysyl-[protein] + acetyl-CoA = N(6)-biotinyl-L-lysyl-[protein] + malonyl-CoA. It participates in lipid metabolism; malonyl-CoA biosynthesis; malonyl-CoA from acetyl-CoA: step 1/1. Component of the acetyl coenzyme A carboxylase (ACC) complex. Biotin carboxylase (BC) catalyzes the carboxylation of biotin on its carrier protein (BCCP) and then the CO(2) group is transferred by the transcarboxylase to acetyl-CoA to form malonyl-CoA. The polypeptide is Acetyl-coenzyme A carboxylase carboxyl transferase subunit beta (Bacillus cytotoxicus (strain DSM 22905 / CIP 110041 / 391-98 / NVH 391-98)).